The following is a 148-amino-acid chain: Pivalyl-CoA mutase small subunit (148 aa).

The B12-binding domain occupies 8–138 (PLRVLVTKIG…TALGQKSRAE (131 aa)). His21 is an adenosylcob(III)alamin binding site.

The protein belongs to the acyl-CoA mutase small subunit family. As to quaternary structure, monomer in the absence of the PCM large subunit. Weakly interacts with the PCM large subunit; an alpha(2)beta(2) stoichiometry seems to represent the active state of the enzyme. Adenosylcob(III)alamin is required as a cofactor.

It catalyses the reaction 3-methylbutanoyl-CoA = 2,2-dimethylpropanoyl-CoA. In terms of biological role, together with Xaut_5043, catalyzes the reversible isomerization between pivalyl-CoA and isovaleryl-CoA, using radical chemistry. Does not exhibit isobutyryl-CoA mutase (ICM) activity. This chain is Pivalyl-CoA mutase small subunit, found in Xanthobacter autotrophicus (strain ATCC BAA-1158 / Py2).